The primary structure comprises 435 residues: 3-phosphoshikimate 1-carboxyvinyltransferase (435 aa).

The 3-phosphoshikimate site is built by K21, S22, and R26. Position 21 (K21) interacts with phosphoenolpyruvate. Positions 100 and 128 each coordinate phosphoenolpyruvate. 3-phosphoshikimate is bound by residues S171, S172, Q173, S199, D313, and K340. Q173 serves as a coordination point for phosphoenolpyruvate. The active-site Proton acceptor is D313. Phosphoenolpyruvate is bound by residues R344, R386, and K412.

This sequence belongs to the EPSP synthase family. As to quaternary structure, monomer.

Its subcellular location is the cytoplasm. The enzyme catalyses 3-phosphoshikimate + phosphoenolpyruvate = 5-O-(1-carboxyvinyl)-3-phosphoshikimate + phosphate. The protein operates within metabolic intermediate biosynthesis; chorismate biosynthesis; chorismate from D-erythrose 4-phosphate and phosphoenolpyruvate: step 6/7. Its function is as follows. Catalyzes the transfer of the enolpyruvyl moiety of phosphoenolpyruvate (PEP) to the 5-hydroxyl of shikimate-3-phosphate (S3P) to produce enolpyruvyl shikimate-3-phosphate and inorganic phosphate. The polypeptide is 3-phosphoshikimate 1-carboxyvinyltransferase (Clostridium novyi (strain NT)).